A 970-amino-acid chain; its full sequence is Cullin-4B (970 aa).

The span at 1–14 shows a compositional bias: basic and acidic residues; that stretch reads MSRSTRSKERREND. 2 disordered regions span residues 1 to 157 and 189 to 211; these read MSRS…SFCL and AEES…QQQQ. T15 carries the phosphothreonine modification. Phosphoserine is present on S17. Residues 36–57 show a composition bias toward pro residues; that stretch reads PPRPPYPPLLPPVFPPPTPPPQ. A compositionally biased stretch (low complexity) spans 78–98; the sequence is SGFSSPNPSAASAAAQEVRSA. Residues 99–109 are compositionally biased toward polar residues; it reads TDGNTSTTPPT. T106 carries the post-translational modification Phosphothreonine. S110 bears the Phosphoserine mark. The Nuclear localization signal signature appears at 112-115; the sequence is KKRK. Residues 117–126 are compositionally biased toward low complexity; the sequence is NSSSSSSNSS. Over residues 146–155 the composition is skewed to polar residues; it reads DSASPSTSSF. Phosphoserine is present on residues S154 and S200. Residues 192–211 show a composition bias toward low complexity; it reads SSSSSSSSSPTAATSQQQQQ. Residue T202 is modified to Phosphothreonine. K247 is covalently cross-linked (Glycyl lysine isopeptide (Lys-Gly) (interchain with G-Cter in ubiquitin)). Position 250 is a phosphoserine (S250). The Cullin neddylation domain maps to 902-962; that stretch reads DRQYQIDAAI…RDYMERDKEN (61 aa). Residue K916 forms a Glycyl lysine isopeptide (Lys-Gly) (interchain with G-Cter in NEDD8) linkage.

The protein belongs to the cullin family. In terms of assembly, component of multiple DCX (DDB1-CUL4-X-box) E3 ubiquitin-protein ligase complexes that seem to be formed of DDB1, CUL4A or CUL4B, RBX1 and a variable substrate recognition component which seems to belong to a protein family described as DCAF (Ddb1- and Cul4-associated factor) or CDW (CUL4-DDB1-associated WD40-repeat) proteins. Component of the DCX(DTL) complex with the putative substrate recognition component DTL. Component of the DCX(DDB2) complex with the putative substrate recognition component DDB2. Component of DCX complexes part of the DesCEND (destruction via C-end degrons) pathway, which contain either TRPC4AP or DCAF12 as substrate-recognition component. Component of the DCX(AMBRA1) complex with the substrate recognition component AMBRA1. Part of a complex with RBX1 and TIP120A/CAND1. Component of the DCX(WDR77) complex, composed of Cul4b, Ddb1, Wdr77 and Rbx1. Interacts with RBX1, GRWD1, MLST8, SMU1, TLE2, TLE3, DCAF1, DDA1, DCAF6, DCAF17, DDB2, DCAF8, TIP120A/CAND1 and TMEM113. Interacts with cyclin E (CCNE1 or CCNE2) and with importins alpha-1 (KPNA2), alpha-3 (KPNA4), alpha-5 (KPNA1) and beta-1 (KPNB1). May interact with WDR26, WDR51B, SNRNP40, WDR61, WDR76 and WDR5. Interacts (unneddylated form) with DCUN1D1, DCUN1D2, DCUN1D3, DCUN1D4 and DCUN1D5; these interactions promote the cullin neddylation. In terms of processing, neddylated. Deneddylated via its interaction with the COP9 signalosome (CSN) complex. Expressed in oocytes (at protein level).

Its subcellular location is the cytoplasm. It is found in the nucleus. Its pathway is protein modification; protein ubiquitination. Functionally, core component of multiple cullin-RING-based E3 ubiquitin-protein ligase complexes which mediate the ubiquitination and subsequent proteasomal degradation of target proteins. The functional specificity of the E3 ubiquitin-protein ligase complex depends on the variable substrate recognition subunit. CUL4B may act within the complex as a scaffold protein, contributing to catalysis through positioning of the substrate and the ubiquitin-conjugating enzyme. Plays a role as part of the E3 ubiquitin-protein ligase complex in polyubiquitination of CDT1, histone H2A, histone H3 and histone H4 in response to radiation-induced DNA damage. Targeted to UV damaged chromatin by DDB2 and may be important for DNA repair and DNA replication. A number of DCX complexes (containing either TRPC4AP or DCAF12 as substrate-recognition component) are part of the DesCEND (destruction via C-end degrons) pathway, which recognizes a C-degron located at the extreme C terminus of target proteins, leading to their ubiquitination and degradation. The DCX(AMBRA1) complex is a master regulator of the transition from G1 to S cell phase by mediating ubiquitination of phosphorylated cyclin-D (CCND1, CCND2 and CCND3). The DCX(AMBRA1) complex also acts as a regulator of Cul5-RING (CRL5) E3 ubiquitin-protein ligase complexes by mediating ubiquitination and degradation of Elongin-C (ELOC) component of CRL5 complexes. Required for ubiquitination of cyclin E (CCNE1 or CCNE2), and consequently, normal G1 cell cycle progression. Component of the DCX(WDR77) complex, which mediates ubiquitination and degradation of Irgm1 in intestinal cells. Regulates the mammalian target-of-rapamycin (mTOR) pathway involved in control of cell growth, size and metabolism. Specific CUL4B regulation of the mTORC1-mediated pathway is dependent upon 26S proteasome function and requires interaction between CUL4B and MLST8. With CUL4A, contributes to ribosome biogenesis. This chain is Cullin-4B, found in Mus musculus (Mouse).